The sequence spans 398 residues: Nicotinate phosphoribosyltransferase (398 aa).

Position 214 is a phosphohistidine; by autocatalysis (His214).

Belongs to the NAPRTase family. In terms of processing, transiently phosphorylated on a His residue during the reaction cycle. Phosphorylation strongly increases the affinity for substrates and increases the rate of nicotinate D-ribonucleotide production. Dephosphorylation regenerates the low-affinity form of the enzyme, leading to product release.

It catalyses the reaction nicotinate + 5-phospho-alpha-D-ribose 1-diphosphate + ATP + H2O = nicotinate beta-D-ribonucleotide + ADP + phosphate + diphosphate. Its pathway is cofactor biosynthesis; NAD(+) biosynthesis; nicotinate D-ribonucleotide from nicotinate: step 1/1. Catalyzes the synthesis of beta-nicotinate D-ribonucleotide from nicotinate and 5-phospho-D-ribose 1-phosphate at the expense of ATP. This is Nicotinate phosphoribosyltransferase from Xanthomonas campestris pv. campestris (strain 8004).